The primary structure comprises 182 residues: Large ribosomal subunit protein uL16 (182 aa).

Belongs to the universal ribosomal protein uL16 family. In terms of assembly, part of the 50S ribosomal subunit.

This Thermococcus kodakarensis (strain ATCC BAA-918 / JCM 12380 / KOD1) (Pyrococcus kodakaraensis (strain KOD1)) protein is Large ribosomal subunit protein uL16.